We begin with the raw amino-acid sequence, 362 residues long: Protein RAFTIN 1B (362 aa).

A signal peptide spans 1–20 (MARFLVALLAATLVAVQAGG). A disordered region spans residues 58 to 94 (STSFVRDPEDRPPFDYRDYSRSSSDDEPSKSTVAASG). A compositionally biased stretch (basic and acidic residues) spans 63 to 86 (RDPEDRPPFDYRDYSRSSSDDEPS). A glycan (N-linked (GlcNAc...) asparagine) is linked at N102. The BURP domain maps to 142-356 (FFHEEAVRVG…PYGHIIWAKN (215 aa)).

In terms of tissue distribution, specifically expressed in anthers, in the tapetum and microspores (at protein level).

Functionally, required for pollen development. Probably synthesized in the tapetum, packaged in Ubisch bodies and transported at appropriate stages to the micropsores. This Triticum aestivum (Wheat) protein is Protein RAFTIN 1B (RAFTIN1B).